A 429-amino-acid chain; its full sequence is Probable M18 family aminopeptidase 2 (429 aa).

Positions 82, 156, and 401 each coordinate Zn(2+).

The protein belongs to the peptidase M18 family. The cofactor is Zn(2+).

This Pseudomonas aeruginosa (strain LESB58) protein is Probable M18 family aminopeptidase 2.